The primary structure comprises 308 residues: UPF0282 protein STK_23220 (308 aa).

The protein belongs to the UPF0282 family.

This chain is UPF0282 protein STK_23220, found in Sulfurisphaera tokodaii (strain DSM 16993 / JCM 10545 / NBRC 100140 / 7) (Sulfolobus tokodaii).